A 122-amino-acid chain; its full sequence is MKANTMFIILCLTLSTLCVSSQFTSVLGKIFVTNRAVKSSSYEKYPFDLSKEDGAQPYFMTPRLRFYPIGKRAAGGMEQSEGQNPETKSHSWRERSVLTPSLLSLGESLESGISKRISINQD.

Positions 1-21 (MKANTMFIILCLTLSTLCVSS) are cleaved as a signal peptide. Positions 22 to 34 (QFTSVLGKIFVTN) are excised as a propeptide. Isoleucine amide is present on Ile69. The propeptide occupies 73-122 (AAGGMEQSEGQNPETKSHSWRERSVLTPSLLSLGESLESGISKRISINQD). The tract at residues 74 to 95 (AGGMEQSEGQNPETKSHSWRER) is disordered.

Belongs to the molluscan ELH family.

The protein resides in the secreted. In terms of biological role, the atrial gland peptide A and peptide B precursors are the source of the 2 peptides that, upon release from this reproductive system gland, initiate the egg-laying process by exciting the bag cell neurons. These neurons, clustered in neural connectives near the abdominal ganglion, in turn release other peptides that act directly on the ganglion and also, via the circulating hemolymph, on many other organs to control the physiological processes of egg-laying. One of these other peptides is the egg-laying hormone. This Aplysia californica (California sea hare) protein is Atrial gland peptide B.